The sequence spans 464 residues: Argininosuccinate lyase (464 aa).

A2 bears the N-acetylalanine mark. An N6-acetyllysine modification is found at K7. Residue S27 coordinates 2-(N(omega)-L-arginino)succinate. The residue at position 69 (K69) is an N6-acetyllysine. 2-(N(omega)-L-arginino)succinate contacts are provided by N114 and T159. H160 serves as the catalytic Proton acceptor. The active-site Proton donor is S281. Position 288 is an N6-acetyllysine (K288). 4 residues coordinate 2-(N(omega)-L-arginino)succinate: N289, Y321, Q326, and K329.

Belongs to the lyase 1 family. Argininosuccinate lyase subfamily. Homotetramer. Forms tissue-specific complexes with ASS1, SLC7A1, HSP90AA1 and nitric oxide synthase NOS1, NOS2 or NOS3; the complex maintenance is independent of ASL catalytic function. In terms of processing, acetylation modifies enzyme activity in response to alterations of extracellular nutrient availability. Acetylation increased with trichostin A (TSA) or with nicotinamide (NAM). Glucose increases acetylation by about a factor of 3 with decreasing enzyme activity. Acetylation on Lys-288 is decreased on the addition of extra amino acids resulting in activation of enzyme activity. Expressed in lung and brain (at protein level).

It carries out the reaction 2-(N(omega)-L-arginino)succinate = fumarate + L-arginine. The protein operates within amino-acid biosynthesis; L-arginine biosynthesis; L-arginine from L-ornithine and carbamoyl phosphate: step 3/3. Its pathway is nitrogen metabolism; urea cycle; L-arginine and fumarate from (N(omega)-L-arginino)succinate: step 1/1. With respect to regulation, enzyme activity is regulated by acetylation. In terms of biological role, catalyzes the reversible cleavage of L-argininosuccinate to fumarate and L-arginine, an intermediate step reaction in the urea cycle mostly providing for hepatic nitrogen detoxification into excretable urea as well as de novo L-arginine synthesis in nonhepatic tissues. Essential regulator of intracellular and extracellular L-arginine pools. As part of citrulline-nitric oxide cycle, forms tissue-specific multiprotein complexes with argininosuccinate synthase ASS1, transport protein SLC7A1 and nitric oxide synthase NOS1, NOS2 or NOS3, allowing for cell-autonomous L-arginine synthesis while channeling extracellular L-arginine to nitric oxide synthesis pathway. The protein is Argininosuccinate lyase (Asl) of Mus musculus (Mouse).